We begin with the raw amino-acid sequence, 319 residues long: tRNA-modifying protein YgfZ (319 aa).

Trp27 and Trp189 together coordinate folate.

The protein belongs to the tRNA-modifying YgfZ family.

Its subcellular location is the cytoplasm. Its function is as follows. Folate-binding protein involved in regulating the level of ATP-DnaA and in the modification of some tRNAs. It is probably a key factor in regulatory networks that act via tRNA modification, such as initiation of chromosomal replication. This Buchnera aphidicola subsp. Schizaphis graminum (strain Sg) protein is tRNA-modifying protein YgfZ.